Reading from the N-terminus, the 459-residue chain is MPSKTDFTSSTMTPREIVQELDRHIVGQQVAKRSVAIALRNRWRRMQLPEELRNEVMPKNILMIGPTGVGKTEIARRLATLANAPFVKVEATRFTEVGYVGKDVEQIGRDLVDTAVKMYREQAKVRVRTQVEEYAEERILDALLPRRSVGIGFDVDADVIRQEPSAHDSETRAKFRRMLRSGELEDREIELDVAVNVSMDIMTPPGMEEMGQQLRQMFSNIGGGKSQKRKLTIKAARPLLIEEEAAKLVNEDEIRAAAIEACEQNGIVFIDEIDKVVKRGDTVGGGDVSREGVQRDLLPLVEGSNVSTKYGTIRTNHILFIASGAFHLTKPSDLIPELQGRFPIRVELDALSKADFIRILTEPKAALTKQYQELLKTEGVSLDFTEDAIDRIAEIAYLVNERQENIGARRLHTVLERLLETLSYESPDRDGESVTVDADYVNAHLGELVKDPDLSRYIL.

Residues valine 26, glycine 68–glutamate 73, aspartate 271, glutamate 337, and arginine 409 each bind ATP.

Belongs to the ClpX chaperone family. HslU subfamily. As to quaternary structure, a double ring-shaped homohexamer of HslV is capped on each side by a ring-shaped HslU homohexamer. The assembly of the HslU/HslV complex is dependent on binding of ATP.

It localises to the cytoplasm. Functionally, ATPase subunit of a proteasome-like degradation complex; this subunit has chaperone activity. The binding of ATP and its subsequent hydrolysis by HslU are essential for unfolding of protein substrates subsequently hydrolyzed by HslV. HslU recognizes the N-terminal part of its protein substrates and unfolds these before they are guided to HslV for hydrolysis. This Xylella fastidiosa (strain M12) protein is ATP-dependent protease ATPase subunit HslU.